The primary structure comprises 113 residues: MQAKAVAKQVRIAPRKARLVIDLIRGKQVGEAIAILKHTPKAASPIIEKVLNSAIANAEHNYEMEPNNLVISEAFVDEGVTLKRFRPRAMGRASRINKRTSHITIVVTEKKEG.

It belongs to the universal ribosomal protein uL22 family. As to quaternary structure, part of the 50S ribosomal subunit.

This protein binds specifically to 23S rRNA; its binding is stimulated by other ribosomal proteins, e.g. L4, L17, and L20. It is important during the early stages of 50S assembly. It makes multiple contacts with different domains of the 23S rRNA in the assembled 50S subunit and ribosome. In terms of biological role, the globular domain of the protein is located near the polypeptide exit tunnel on the outside of the subunit, while an extended beta-hairpin is found that lines the wall of the exit tunnel in the center of the 70S ribosome. This is Large ribosomal subunit protein uL22 from Halalkalibacterium halodurans (strain ATCC BAA-125 / DSM 18197 / FERM 7344 / JCM 9153 / C-125) (Bacillus halodurans).